The primary structure comprises 869 residues: Aconitate hydratase B (869 aa).

Residues arginine 191, 244 to 246 (SSR), 417 to 419 (QDT), and serine 501 contribute to the substrate site. 3 residues coordinate [4Fe-4S] cluster: cysteine 713, cysteine 772, and cysteine 775. Substrate is bound by residues arginine 794 and arginine 799.

Belongs to the aconitase/IPM isomerase family. Monomer. The cofactor is [4Fe-4S] cluster.

The catalysed reaction is citrate = D-threo-isocitrate. The enzyme catalyses (2S,3R)-3-hydroxybutane-1,2,3-tricarboxylate = 2-methyl-cis-aconitate + H2O. Its pathway is carbohydrate metabolism; tricarboxylic acid cycle; isocitrate from oxaloacetate: step 2/2. The protein operates within organic acid metabolism; propanoate degradation. Its function is as follows. Involved in the catabolism of short chain fatty acids (SCFA) via the tricarboxylic acid (TCA)(acetyl degradation route) and probably via the 2-methylcitrate cycle I (propionate degradation route). Catalyzes the reversible isomerization of citrate to isocitrate via cis-aconitate. Catalyzes the hydration of 2-methyl-cis-aconitate to yield (2R,3S)-2-methylisocitrate. The apo form of AcnB functions as a RNA-binding regulatory protein. In Pseudomonas aeruginosa (strain ATCC 15692 / DSM 22644 / CIP 104116 / JCM 14847 / LMG 12228 / 1C / PRS 101 / PAO1), this protein is Aconitate hydratase B (acnB).